Consider the following 1457-residue polypeptide: Bridge-like lipid transfer protein family member 3B (1457 aa).

Residues 3–94 (GIIKKQILKH…DKVIMEMSTC (92 aa)) form the Chorein N-terminal domain. Disordered regions lie at residues 267-295 (STEQ…KTPQ) and 409-449 (DRNL…PQPS). A compositionally biased stretch (polar residues) spans 278–295 (PTQSSTVTSSAQHVKTPQ). A phosphoserine mark is found at serine 414, serine 418, serine 774, and serine 934. Disordered regions lie at residues 975–1038 (SEDE…TGKG), 1056–1099 (ASLS…LSVS), and 1145–1183 (SNTS…TQEN). Residues 980–995 (SGLSHKSGSGEMTSEG) show a composition bias toward polar residues. The residue at position 1008 (serine 1008) is a Phosphoserine. Over residues 1145–1180 (SNTSCQSPAESVNTSANTQTCGEASPEAVSTNSEGT) the composition is skewed to polar residues. Residues 1410–1455 (ANFLDITREQLMEENECLRQRLAQAKMELAEAHSARDELLHQMKRM) are a coiled coil.

In terms of assembly, homodimer (via N-terminus). Associates with the Golgi-associated retrograde protein (GARP) complex. Interacts with GARP complex component VPS52. Interacts (via C-terminal coiled-coil domain) with STX6.

It localises to the cytoplasm. The protein localises to the cytosol. It is found in the early endosome. Its function is as follows. Tube-forming lipid transport protein which mediates the transfer of lipids between membranes at organelle contact sites. Required for retrograde traffic of vesicle clusters in the early endocytic pathway to the Golgi complex. The chain is Bridge-like lipid transfer protein family member 3B (Bltp3b) from Mus musculus (Mouse).